The sequence spans 286 residues: Phosphatidylserine decarboxylase proenzyme (286 aa).

Active-site charge relay system; for autoendoproteolytic cleavage activity residues include aspartate 90, histidine 147, and serine 252. Serine 252 acts as the Schiff-base intermediate with substrate; via pyruvic acid; for decarboxylase activity in catalysis. Serine 252 is subject to Pyruvic acid (Ser); by autocatalysis.

This sequence belongs to the phosphatidylserine decarboxylase family. PSD-B subfamily. Prokaryotic type I sub-subfamily. Heterodimer of a large membrane-associated beta subunit and a small pyruvoyl-containing alpha subunit. Pyruvate is required as a cofactor. Post-translationally, is synthesized initially as an inactive proenzyme. Formation of the active enzyme involves a self-maturation process in which the active site pyruvoyl group is generated from an internal serine residue via an autocatalytic post-translational modification. Two non-identical subunits are generated from the proenzyme in this reaction, and the pyruvate is formed at the N-terminus of the alpha chain, which is derived from the carboxyl end of the proenzyme. The autoendoproteolytic cleavage occurs by a canonical serine protease mechanism, in which the side chain hydroxyl group of the serine supplies its oxygen atom to form the C-terminus of the beta chain, while the remainder of the serine residue undergoes an oxidative deamination to produce ammonia and the pyruvoyl prosthetic group on the alpha chain. During this reaction, the Ser that is part of the protease active site of the proenzyme becomes the pyruvoyl prosthetic group, which constitutes an essential element of the active site of the mature decarboxylase.

It is found in the cell membrane. It catalyses the reaction a 1,2-diacyl-sn-glycero-3-phospho-L-serine + H(+) = a 1,2-diacyl-sn-glycero-3-phosphoethanolamine + CO2. The protein operates within phospholipid metabolism; phosphatidylethanolamine biosynthesis; phosphatidylethanolamine from CDP-diacylglycerol: step 2/2. Catalyzes the formation of phosphatidylethanolamine (PtdEtn) from phosphatidylserine (PtdSer). This Pseudomonas fluorescens (strain SBW25) protein is Phosphatidylserine decarboxylase proenzyme.